The primary structure comprises 248 residues: Coproheme decarboxylase (248 aa).

Residues arginine 130, 144 to 148, histidine 171, glutamine 184, and serine 222 each bind Fe-coproporphyrin III; that span reads YPMDK. Tyrosine 144 is a catalytic residue.

This sequence belongs to the ChdC family. Type 1 subfamily. Homopentamer. Fe-coproporphyrin III is required as a cofactor.

The catalysed reaction is Fe-coproporphyrin III + 2 H2O2 + 2 H(+) = heme b + 2 CO2 + 4 H2O. It carries out the reaction Fe-coproporphyrin III + H2O2 + H(+) = harderoheme III + CO2 + 2 H2O. It catalyses the reaction harderoheme III + H2O2 + H(+) = heme b + CO2 + 2 H2O. It participates in porphyrin-containing compound metabolism; protoheme biosynthesis. In terms of biological role, involved in coproporphyrin-dependent heme b biosynthesis. Catalyzes the decarboxylation of Fe-coproporphyrin III (coproheme) to heme b (protoheme IX), the last step of the pathway. The reaction occurs in a stepwise manner with a three-propionate intermediate. This is Coproheme decarboxylase from Geobacillus kaustophilus (strain HTA426).